Here is a 71-residue protein sequence, read N- to C-terminus: Light-harvesting protein B-800/850 alpha chain (71 aa).

Topologically, residues 1 to 15 (MNQGKVWRVVKPTVG) are cytoplasmic. Residues 16-36 (VPVYLGAVAVTALILHGGLLA) form a helical membrane-spanning segment. H31 is a binding site for a bacteriochlorophyll. Residues 37 to 50 (KTDWFGAYWNGGKK) are Periplasmic-facing. Residues 51–71 (AAAAAAAVAPAPVAAPQAPAQ) form a helical membrane-spanning segment.

It belongs to the antenna complex alpha subunit family. An alpha/beta heterodimer conjugated to 3 bacteriochlorophyll molecules. The core complex is formed by different alpha and beta chains, binding bacteriochlorophyll molecules, and arranged most probably in tetrameric structures disposed around the reaction center. The non-pigmented gamma chains may constitute additional components.

Its subcellular location is the cell membrane. In terms of biological role, antenna complexes are light-harvesting systems, which transfer the excitation energy to the reaction centers. The chain is Light-harvesting protein B-800/850 alpha chain (pucA) from Rubrivivax gelatinosus (Rhodocyclus gelatinosus).